The sequence spans 509 residues: Histidine ammonia-lyase (509 aa).

The segment at residues 144–146 is a cross-link (5-imidazolinone (Ala-Gly)); sequence ASG. 2,3-didehydroalanine (Ser) is present on Ser145.

It belongs to the PAL/histidase family. In terms of processing, contains an active site 4-methylidene-imidazol-5-one (MIO), which is formed autocatalytically by cyclization and dehydration of residues Ala-Ser-Gly.

The protein resides in the cytoplasm. It carries out the reaction L-histidine = trans-urocanate + NH4(+). It participates in amino-acid degradation; L-histidine degradation into L-glutamate; N-formimidoyl-L-glutamate from L-histidine: step 1/3. The sequence is that of Histidine ammonia-lyase from Pseudoalteromonas atlantica (strain T6c / ATCC BAA-1087).